The primary structure comprises 176 residues: MILIIYAHPYPHHSHANKQMLEQAGTLENVEIRSLYHLYPDFNIDVAAEQEALSRASLIVWQHPMQWYSVPPLLKLWMDKALTHGWAYGHGGTALHGKYLLWAVTTGGGENHFTIGSHPGFDVLSQPLQATALYCGLKWLPPFSMHCTFICDDDTLQAQARQYKQRLLAWQEVNHG.

Residues H8, 14 to 17 (SHAN), 65 to 68 (MQWY), and 105 to 108 (TTGG) each bind FMN.

It belongs to the NAD(P)H dehydrogenase (quinone) family. KefF subfamily. In terms of assembly, homodimer. Interacts with KefC. FMN is required as a cofactor.

The protein localises to the cell inner membrane. The catalysed reaction is a quinone + NADH + H(+) = a quinol + NAD(+). It catalyses the reaction a quinone + NADPH + H(+) = a quinol + NADP(+). Its function is as follows. Regulatory subunit of a potassium efflux system that confers protection against electrophiles. Required for full activity of KefC. Shows redox enzymatic activity, but this enzymatic activity is not required for activation of KefC. The polypeptide is Glutathione-regulated potassium-efflux system ancillary protein KefF (Salmonella gallinarum (strain 287/91 / NCTC 13346)).